The chain runs to 78 residues: MREAKDGVLISVHVSPGSKEVSFSYDEWRRAVEVRIKSPAKEGKANRELLGIFRQIFGEVELVSGEKSRSKVLKGKRE.

The protein belongs to the UPF0235 family.

The chain is UPF0235 protein AF_2072 from Archaeoglobus fulgidus (strain ATCC 49558 / DSM 4304 / JCM 9628 / NBRC 100126 / VC-16).